The following is a 439-amino-acid chain: GTPase Der (439 aa).

EngA-type G domains follow at residues 4–169 (AMVA…PEND) and 177–352 (IKIA…EEYN). GTP is bound by residues 10 to 17 (GRPNVGKS), 57 to 61 (DTGGL), 120 to 123 (NKVD), 183 to 190 (GRPNVGKS), 230 to 234 (DTAGI), and 295 to 298 (NKWD). In terms of domain architecture, KH-like spans 353–437 (KRITTGLLNN…PIVISTKKRG (85 aa)).

This sequence belongs to the TRAFAC class TrmE-Era-EngA-EngB-Septin-like GTPase superfamily. EngA (Der) GTPase family. As to quaternary structure, associates with the 50S ribosomal subunit.

Functionally, GTPase that plays an essential role in the late steps of ribosome biogenesis. This Caldanaerobacter subterraneus subsp. tengcongensis (strain DSM 15242 / JCM 11007 / NBRC 100824 / MB4) (Thermoanaerobacter tengcongensis) protein is GTPase Der.